Reading from the N-terminus, the 1946-residue chain is Chromodomain-helicase-DNA-binding protein 5 (1946 aa).

3 disordered regions span residues 1–140 (MRGP…SGQL), 236–272 (VPQT…GRGK), and 285–340 (SKRK…GDGY). Acidic residues-rich tracts occupy residues 17–37 (EEME…EGFE) and 72–90 (NDEM…ESEG). 2 stretches are compositionally biased toward basic residues: residues 96–118 (TKKK…KRKK) and 254–272 (GVRK…GRGK). The span at 293-303 (SEEDEREDSDL) shows a compositional bias: acidic residues. The span at 323–332 (KKNKRRRKKK) shows a compositional bias: basic residues. 2 consecutive PHD-type zinc fingers follow at residues 345–392 (QDYC…CEKE) and 418–465 (MEFC…CTCP). Residues 345–655 (QDYCEVCQQG…HRELMLGEDA (311 aa)) form a histone-binding region. The Chromo 1 domain maps to 499–556 (MPPPRPLEGIPEREFFVKWAGLSYWHCSWVKELQLELYHTVMYRNYQRKNDMDEPPPF). Residues 551 to 573 (DEPPPFDYGSGDEDGKSEKRKNK) form a disordered region. Over residues 563 to 573 (EDGKSEKRKNK) the composition is skewed to basic and acidic residues. A Chromo 2 domain is found at 594–655 (MMVHRILNHS…HRELMLGEDA (62 aa)). The region spanning 714–898 (RFSWAQGTDT…FHLLNFLTPE (185 aa)) is the Helicase ATP-binding domain. 727–734 (DEMGLGKT) is an ATP binding site. A DEAH box motif is present at residues 849–852 (DEAH). Residues 1030–1195 (LLQKMLKKLR…MTKQELDDIL (166 aa)) form the Helicase C-terminal domain. 5 disordered regions span residues 1210–1254 (MMSQ…VEDS), 1353–1413 (YNDA…LPPL), 1525–1566 (KYST…APLG), 1579–1696 (DEKE…EDKN), and 1926–1946 (SFPA…LQPF). A compositionally biased stretch (polar residues) spans 1212–1230 (SQGQRPTTPIPDIQSTKGG). 2 stretches are compositionally biased toward acidic residues: residues 1357-1368 (SQEDQEWQDELS) and 1378-1387 (SEDEDEDFEE). Glutamine 1392 is subject to N5-methylglutamine. The span at 1551–1564 (TPVPASPAQLPPAP) shows a compositional bias: pro residues. At serine 1556 the chain carries Phosphoserine. 3 stretches are compositionally biased toward basic and acidic residues: residues 1602–1629 (DRVE…EVEK), 1637–1654 (PLKE…DKPE), and 1661–1676 (GDFR…KEPG).

It belongs to the SNF2/RAD54 helicase family. Component of the nucleosome remodeling and deacetylase (NuRD) repressor complex, composed of core proteins MTA1, MTA2, MTA3, RBBP4, RBBP7, HDAC1, HDAC2, MBD2, MBD3, and peripherally associated proteins CDK2AP1, CDK2AP2, GATAD2A, GATAD2B, CHD3, CHD4 and CHD5. The exact stoichiometry of the NuRD complex is unknown, and some subunits such as MBD2 and MBD3, GATAD2A and GATAD2B, and CHD3, CHD4 and CHD5 define mutually exclusive NuRD complexes. Interacts with HDAC2. Methylated at Gln-1392 by N6AMT1. Specifically expressed by neurons in brain, retina and adrenal gland (at protein level). Also detected in testis.

It is found in the nucleus. Its subcellular location is the chromosome. It carries out the reaction ATP + H2O = ADP + phosphate + H(+). Its function is as follows. ATP-dependent chromatin-remodeling factor that binds DNA through histones and regulates gene transcription. May specifically recognize and bind trimethylated 'Lys-27' (H3K27me3) and non-methylated 'Lys-4' of histone H3. Acts as a component of the histone deacetylase NuRD complex which participates in the remodeling of chromatin. Plays a role in the development of the nervous system by activating the expression of genes promoting neuron terminal differentiation. In parallel, it may also positively regulate the trimethylation of histone H3 at 'Lys-27' thereby specifically repressing genes that promote the differentiation into non-neuronal cell lineages. Regulates the expression of genes involved in cell proliferation and differentiation. Downstream activated genes may include CDKN2A that positively regulates the p53/TP53 pathway, which in turn, prevents cell proliferation. In spermatogenesis, it probably regulates histone hyperacetylation and the replacement of histones by transition proteins in chromatin, a crucial step in the condensation of spermatid chromatin and the production of functional spermatozoa. This Mus musculus (Mouse) protein is Chromodomain-helicase-DNA-binding protein 5 (Chd5).